Consider the following 164-residue polypeptide: Putative 4-hydroxy-4-methyl-2-oxoglutarate aldolase (164 aa).

Residues 80–83 (GGNL) and Arg-102 contribute to the substrate site. Asp-103 contacts a divalent metal cation.

The protein belongs to the class II aldolase/RraA-like family. As to quaternary structure, homotrimer. Requires a divalent metal cation as cofactor.

It carries out the reaction 4-hydroxy-4-methyl-2-oxoglutarate = 2 pyruvate. It catalyses the reaction oxaloacetate + H(+) = pyruvate + CO2. Catalyzes the aldol cleavage of 4-hydroxy-4-methyl-2-oxoglutarate (HMG) into 2 molecules of pyruvate. Also contains a secondary oxaloacetate (OAA) decarboxylase activity due to the common pyruvate enolate transition state formed following C-C bond cleavage in the retro-aldol and decarboxylation reactions. This is Putative 4-hydroxy-4-methyl-2-oxoglutarate aldolase from Paraburkholderia phymatum (strain DSM 17167 / CIP 108236 / LMG 21445 / STM815) (Burkholderia phymatum).